Here is a 445-residue protein sequence, read N- to C-terminus: MSNRKYFGTDGIRGRVGNAPITPDFVLKLGWAAGKVLARHGSRKIIIGKDTRISGYMLESALEAGLAAAGLSASFTGPMPTPAVAYLTRTFRAEAGIVISASHNPFYDNGIKFFSIDGTKLPDDVEEAIEAEMEKEITCVDSAELGKASRIVDAAGRYIEFCKGTFPNELSLNGLKVVVDCANGATYHIAPNVLRELGATVIAIGCEPNGVNINEEVGATDVRALQARVLAEKADLGIALDGDGDRVIMVDHEGNKVDGDQIMYIIAREGLRQGQLRGGAVGTLMSNMGLELALKQLGIPFARAKVGDRYVLEKLQEKGWRIGAENSGHVILLDKTTTGDGIVAGLQVLAAMVRNHMSLHDLCSGMKMFPQILVNVRYTAGSGDPLENEAVKAVTADVEATLGNRGRVLLRKSGTEPLIRVMVEGEDEAQVTAFAHRIADAVKAV.

S102 functions as the Phosphoserine intermediate in the catalytic mechanism. 4 residues coordinate Mg(2+): S102, D241, D243, and D245. S102 is subject to Phosphoserine.

It belongs to the phosphohexose mutase family. Requires Mg(2+) as cofactor. Activated by phosphorylation.

The enzyme catalyses alpha-D-glucosamine 1-phosphate = D-glucosamine 6-phosphate. Its function is as follows. Catalyzes the conversion of glucosamine-6-phosphate to glucosamine-1-phosphate. This is Phosphoglucosamine mutase from Salmonella dublin (strain CT_02021853).